Reading from the N-terminus, the 222-residue chain is uncharacterized protein (222 aa).

The next 7 membrane-spanning stretches (helical) occupy residues 26 to 46 (YGLL…SQQM), 48 to 68 (LPYP…FLTV), 75 to 95 (WGLV…GPIL), 107 to 127 (VITS…AYVL), 139 to 159 (FITA…FFQI), 166 to 186 (ISAG…SAII), and 198 to 218 (ISLY…FGIA).

This sequence belongs to the BI1 family.

The protein resides in the cell membrane. This is an uncharacterized protein from Pseudomonas aeruginosa (strain ATCC 15692 / DSM 22644 / CIP 104116 / JCM 14847 / LMG 12228 / 1C / PRS 101 / PAO1).